A 269-amino-acid polypeptide reads, in one-letter code: Transmembrane protein 41B (269 aa).

The next 6 helical transmembrane spans lie at Thr30 to Tyr50, Phe87 to Ile107, Leu125 to Leu147, Leu175 to Ile195, Pro203 to Ile223, and Ser240 to Phe260. The tract at residues Gly118–Leu229 is VTT domain; required for its function in autophagy.

It belongs to the TMEM41 family.

It is found in the endoplasmic reticulum membrane. It localises to the endomembrane system. It carries out the reaction a 1,2-diacyl-sn-glycero-3-phospho-L-serine(in) = a 1,2-diacyl-sn-glycero-3-phospho-L-serine(out). It catalyses the reaction cholesterol(in) = cholesterol(out). The enzyme catalyses a 1,2-diacyl-sn-glycero-3-phosphocholine(in) = a 1,2-diacyl-sn-glycero-3-phosphocholine(out). The catalysed reaction is a 1,2-diacyl-sn-glycero-3-phosphoethanolamine(in) = a 1,2-diacyl-sn-glycero-3-phosphoethanolamine(out). In terms of biological role, phospholipid scramblase involved in lipid homeostasis and membrane dynamics processes. Has phospholipid scramblase activity toward cholesterol and phosphatidylserine, as well as phosphatidylethanolamine and phosphatidylcholine. Required for autophagosome formation: participates in early stages of autophagosome biogenesis at the endoplasmic reticulum (ER) membrane by reequilibrating the leaflets of the ER as lipids are extracted by ATG2 (ATG2A or ATG2B) to mediate autophagosome assembly. In addition to autophagy, involved in other processes in which phospholipid scramblase activity is required. Required for normal motor neuron development. This chain is Transmembrane protein 41B, found in Gallus gallus (Chicken).